The following is a 365-amino-acid chain: tRNA/tmRNA (uracil-C(5))-methyltransferase (365 aa).

The S-adenosyl-L-methionine site is built by Q189, Y217, N222, E238, and D298. C323 functions as the Nucleophile in the catalytic mechanism. Catalysis depends on E357, which acts as the Proton acceptor.

This sequence belongs to the class I-like SAM-binding methyltransferase superfamily. RNA M5U methyltransferase family. TrmA subfamily.

The enzyme catalyses uridine(54) in tRNA + S-adenosyl-L-methionine = 5-methyluridine(54) in tRNA + S-adenosyl-L-homocysteine + H(+). It catalyses the reaction uridine(341) in tmRNA + S-adenosyl-L-methionine = 5-methyluridine(341) in tmRNA + S-adenosyl-L-homocysteine + H(+). Functionally, dual-specificity methyltransferase that catalyzes the formation of 5-methyluridine at position 54 (m5U54) in all tRNAs, and that of position 341 (m5U341) in tmRNA (transfer-mRNA). The sequence is that of tRNA/tmRNA (uracil-C(5))-methyltransferase from Shewanella baltica (strain OS185).